We begin with the raw amino-acid sequence, 359 residues long: DNA integrity scanning protein DisA (359 aa).

The DAC domain occupies 7 to 146; sequence DDIFRATLAA…GRRYVLDGSA (140 aa). Residues G74, L92, and 105 to 109 contribute to the ATP site; that span reads TRHRT.

It belongs to the DisA family. Homooctamer. Requires Mg(2+) as cofactor.

It carries out the reaction 2 ATP = 3',3'-c-di-AMP + 2 diphosphate. Participates in a DNA-damage check-point that is active prior to asymmetric division when DNA is damaged. DisA forms globular foci that rapidly scan along the chromosomes during sporulation, searching for lesions. When a lesion is present, DisA pauses at the lesion site. This triggers a cellular response that culminates in a temporary block in sporulation initiation. Its function is as follows. Also has diadenylate cyclase activity, catalyzing the condensation of 2 ATP molecules into cyclic di-AMP (c-di-AMP). c-di-AMP acts as a signaling molecule that couples DNA integrity with progression of sporulation. The rise in c-di-AMP level generated by DisA while scanning the chromosome, operates as a positive signal that advances sporulation; upon encountering a lesion, the DisA focus arrests at the damaged site and halts c-di-AMP synthesis. This Frankia casuarinae (strain DSM 45818 / CECT 9043 / HFP020203 / CcI3) protein is DNA integrity scanning protein DisA.